A 237-amino-acid polypeptide reads, in one-letter code: Aspartate/glutamate leucyltransferase (237 aa).

It belongs to the R-transferase family. Bpt subfamily.

It is found in the cytoplasm. The catalysed reaction is N-terminal L-glutamyl-[protein] + L-leucyl-tRNA(Leu) = N-terminal L-leucyl-L-glutamyl-[protein] + tRNA(Leu) + H(+). It catalyses the reaction N-terminal L-aspartyl-[protein] + L-leucyl-tRNA(Leu) = N-terminal L-leucyl-L-aspartyl-[protein] + tRNA(Leu) + H(+). Functions in the N-end rule pathway of protein degradation where it conjugates Leu from its aminoacyl-tRNA to the N-termini of proteins containing an N-terminal aspartate or glutamate. This is Aspartate/glutamate leucyltransferase from Shewanella amazonensis (strain ATCC BAA-1098 / SB2B).